A 71-amino-acid chain; its full sequence is Translation initiation factor IF-1 (71 aa).

One can recognise an S1-like domain in the interval 1 to 71 (MSKDDLIQFT…LTKGRVIHRH (71 aa)).

The protein belongs to the IF-1 family. In terms of assembly, component of the 30S ribosomal translation pre-initiation complex which assembles on the 30S ribosome in the order IF-2 and IF-3, IF-1 and N-formylmethionyl-tRNA(fMet); mRNA recruitment can occur at any time during PIC assembly.

The protein resides in the cytoplasm. In terms of biological role, one of the essential components for the initiation of protein synthesis. Stabilizes the binding of IF-2 and IF-3 on the 30S subunit to which N-formylmethionyl-tRNA(fMet) subsequently binds. Helps modulate mRNA selection, yielding the 30S pre-initiation complex (PIC). Upon addition of the 50S ribosomal subunit IF-1, IF-2 and IF-3 are released leaving the mature 70S translation initiation complex. This Rickettsia conorii (strain ATCC VR-613 / Malish 7) protein is Translation initiation factor IF-1.